A 359-amino-acid polypeptide reads, in one-letter code: MLYCRSGFEKECAGEIQDKATQLEVYGFPRVKKNSGYVVFECYQDGDAEKLVKGLDFSSLIFARQMFAVAAEFEALPSEDRISPILAELSEFESFPRCGDLRIETPDTNEAKELLKFCRKFTVPMRQALRGKGLMWNKDNAKKPVLHICFVAPGHCYVGYSLPGNNSQFFMGIPRLKFPADAPSRSTLKLEEAFHVFIPRDEWDERLAPGMWGVDLGACPGGWTYQLVKRSMFVHCVDNGMMADSLMETGQIKHHMVDGFKFEPDRKNVTWIVCDMVEKPARVAHLMGQWLLKGWAKEAIFNLKLPMKGRYDEVLQDLENLKMFLIENKVKFKLQAKHLYHDREEITIHIQCLSNISPH.

S-adenosyl-L-methionine contacts are provided by residues serine 186, 219–222 (CPGG), aspartate 238, aspartate 258, and aspartate 275. The active-site Proton acceptor is lysine 304.

Belongs to the class I-like SAM-binding methyltransferase superfamily. RNA methyltransferase RlmE family. RlmM subfamily. As to quaternary structure, monomer.

Its subcellular location is the cytoplasm. It carries out the reaction cytidine(2498) in 23S rRNA + S-adenosyl-L-methionine = 2'-O-methylcytidine(2498) in 23S rRNA + S-adenosyl-L-homocysteine + H(+). Catalyzes the 2'-O-methylation at nucleotide C2498 in 23S rRNA. In Vibrio parahaemolyticus serotype O3:K6 (strain RIMD 2210633), this protein is Ribosomal RNA large subunit methyltransferase M.